Consider the following 190-residue polypeptide: Holliday junction branch migration complex subunit RuvA (190 aa).

The interval 1–64 (MIGKLTGTLL…EDAQLLYGFG (64 aa)) is domain I. The segment at 65–143 (THSERQAFRE…ADTGAQSLFV (79 aa)) is domain II. The tract at residues 144-148 (NNDQN) is flexible linker. The segment at 148–190 (NDIVQALMALGYSDKDAAAALKKLPPDVGVTEGIKLALKALAK) is domain III.

This sequence belongs to the RuvA family. In terms of assembly, homotetramer. Forms an RuvA(8)-RuvB(12)-Holliday junction (HJ) complex. HJ DNA is sandwiched between 2 RuvA tetramers; dsDNA enters through RuvA and exits via RuvB. An RuvB hexamer assembles on each DNA strand where it exits the tetramer. Each RuvB hexamer is contacted by two RuvA subunits (via domain III) on 2 adjacent RuvB subunits; this complex drives branch migration. In the full resolvosome a probable DNA-RuvA(4)-RuvB(12)-RuvC(2) complex forms which resolves the HJ.

It localises to the cytoplasm. Functionally, the RuvA-RuvB-RuvC complex processes Holliday junction (HJ) DNA during genetic recombination and DNA repair, while the RuvA-RuvB complex plays an important role in the rescue of blocked DNA replication forks via replication fork reversal (RFR). RuvA specifically binds to HJ cruciform DNA, conferring on it an open structure. The RuvB hexamer acts as an ATP-dependent pump, pulling dsDNA into and through the RuvAB complex. HJ branch migration allows RuvC to scan DNA until it finds its consensus sequence, where it cleaves and resolves the cruciform DNA. This is Holliday junction branch migration complex subunit RuvA from Delftia acidovorans (strain DSM 14801 / SPH-1).